A 206-amino-acid chain; its full sequence is Large ribosomal subunit protein eL13z (206 aa).

The segment at 185-206 (TNKRHAGARAKRAAEAEKEEKK) is disordered. Over residues 186 to 195 (NKRHAGARAK) the composition is skewed to basic residues. Basic and acidic residues predominate over residues 196–206 (RAAEAEKEEKK).

The protein belongs to the eukaryotic ribosomal protein eL13 family.

Its subcellular location is the cytoplasm. This Arabidopsis thaliana (Mouse-ear cress) protein is Large ribosomal subunit protein eL13z (RPL13B).